A 446-amino-acid polypeptide reads, in one-letter code: Phosphoglucosamine mutase (446 aa).

The active-site Phosphoserine intermediate is S103. Mg(2+) contacts are provided by S103, D242, D244, and D246. S103 carries the post-translational modification Phosphoserine.

This sequence belongs to the phosphohexose mutase family. Requires Mg(2+) as cofactor. Post-translationally, activated by phosphorylation.

It catalyses the reaction alpha-D-glucosamine 1-phosphate = D-glucosamine 6-phosphate. Catalyzes the conversion of glucosamine-6-phosphate to glucosamine-1-phosphate. This is Phosphoglucosamine mutase from Vibrio atlanticus (strain LGP32) (Vibrio splendidus (strain Mel32)).